The primary structure comprises 543 residues: MMPTPVILLKEGTDSSQGIPQLVSNISACQVIAEAVRTTLGPRGMDKLIVDGRGKATISNDGATILKLLDVVHPAAKTLVDIAKSQDAEVGDGTTSVTLLAAEFLKQVKPYVEEGLHPQIIIRAFRTATQLAVNKIKEIAVTVKKADKVEQRKLLEKCAMTALSSKLISQQKAFFAKMVVDAVMMLDDLLQLKMIGIKKVQGGALEDSQLVAGVAFKKTFSYAGFEMQPKKYHNPKIALLNVELELKAEKDNAEIRVHTVEDYQAIVDAEWNILYDKLEKIHHSGAKVVLSKLPIGDVATQYFADRDMFCAGRVPEEDLKRTMMACGGSIQTSVNALSADVLGRCQVFEETQIGGERYNFFTGCPKAKTCTFILRGGAEQFMEETERSLHDAIMIVRRAIKNDSVVAGGGAIEMELSKYLRDYSRTIPGKQQLLIGAYAKALEIIPRQLCDNAGFDATNILNKLRARHAQGGTWYGVDINNEDIADNFEAFVWEPAMVRINALTAASEAACLIVSVDETIKNPRSTVDAPTAAGRGRGRGRPH.

M1 carries the post-translational modification N-acetylmethionine. Residue G41 coordinates ADP. G41 provides a ligand contact to ATP. N6-acetyllysine is present on K67. Residue D92 participates in Mg(2+) binding. ADP-binding residues include G93, T94, T95, S96, S164, and S165. ATP is bound at residue G93. S96 lines the ATP pocket. 2 positions are modified to N6-acetyllysine: K250 and K320. Positions 398 and 409 each coordinate ATP. Residue G409 coordinates ADP. Residue K430 forms a Glycyl lysine isopeptide (Lys-Gly) (interchain with G-Cter in SUMO2) linkage. E494 and R499 together coordinate ADP. R499 is a binding site for ATP. The tract at residues 524–543 is disordered; sequence RSTVDAPTAAGRGRGRGRPH. R535 is modified (omega-N-methylarginine).

It belongs to the TCP-1 chaperonin family. Component of the chaperonin-containing T-complex (TRiC), a hexadecamer composed of two identical back-to-back stacked rings enclosing a protein folding chamber. Each ring is made up of eight different subunits: TCP1/CCT1, CCT2, CCT3, CCT4, CCT5, CCT6A/CCT6, CCT7, CCT8. Interacts with PACRG. Interacts with DLEC1.

The protein resides in the cytoplasm. The enzyme catalyses ATP + H2O = ADP + phosphate + H(+). Component of the chaperonin-containing T-complex (TRiC), a molecular chaperone complex that assists the folding of actin, tubulin and other proteins upon ATP hydrolysis. The TRiC complex mediates the folding of WRAP53/TCAB1, thereby regulating telomere maintenance. In Homo sapiens (Human), this protein is T-complex protein 1 subunit eta (CCT7).